Consider the following 297-residue polypeptide: Small ribosomal subunit protein uS2 (297 aa).

The interval 266–297 (GASWDAAEPSDWAATPAAAGQEWAASGATEQW) is disordered. Residues 282 to 297 (AAAGQEWAASGATEQW) are compositionally biased toward low complexity.

Belongs to the universal ribosomal protein uS2 family. In terms of assembly, component of the small ribosomal subunit. Mature ribosomes consist of a small (40S) and a large (60S) subunit. The 40S subunit contains about 33 different proteins and 1 molecule of RNA (18S). The 60S subunit contains about 49 different proteins and 3 molecules of RNA (25S, 5.8S and 5S). Interacts with rps21.

Its subcellular location is the cytoplasm. In terms of biological role, required for the assembly and/or stability of the 40S ribosomal subunit. Required for the processing of the 20S rRNA-precursor to mature 18S rRNA in a late step of the maturation of 40S ribosomal subunits. This Sclerotinia sclerotiorum (strain ATCC 18683 / 1980 / Ss-1) (White mold) protein is Small ribosomal subunit protein uS2 (rps0).